The chain runs to 424 residues: Anaerobic glycerol-3-phosphate dehydrogenase subunit B (424 aa).

It belongs to the anaerobic G-3-P dehydrogenase subunit B family. Composed of a catalytic GlpA/B dimer and of membrane bound GlpC. Requires FMN as cofactor.

It catalyses the reaction a quinone + sn-glycerol 3-phosphate = dihydroxyacetone phosphate + a quinol. Its pathway is polyol metabolism; glycerol degradation via glycerol kinase pathway; glycerone phosphate from sn-glycerol 3-phosphate (anaerobic route): step 1/1. Its function is as follows. Conversion of glycerol 3-phosphate to dihydroxyacetone. Uses fumarate or nitrate as electron acceptor. This is Anaerobic glycerol-3-phosphate dehydrogenase subunit B from Yersinia enterocolitica serotype O:8 / biotype 1B (strain NCTC 13174 / 8081).